The following is a 225-amino-acid chain: Uracil-DNA glycosylase 1 (225 aa).

Asp-68 acts as the Proton acceptor in catalysis.

It belongs to the uracil-DNA glycosylase (UDG) superfamily. UNG family.

The protein resides in the cytoplasm. The enzyme catalyses Hydrolyzes single-stranded DNA or mismatched double-stranded DNA and polynucleotides, releasing free uracil.. Excises uracil residues from the DNA which can arise as a result of misincorporation of dUMP residues by DNA polymerase or due to deamination of cytosine. The chain is Uracil-DNA glycosylase 1 (ung1) from Streptomyces coelicolor (strain ATCC BAA-471 / A3(2) / M145).